The following is a 396-amino-acid chain: MSEYSLFTSESVSEGHPDKIADQISDAVLDAIIAEDKFARVACETLVKTGVAIIAGEVTTTAWVDLEQIVRDVITDIGYTSSDVGFDGATCGVMNIIGKQSPDINQGVDRAKPEDQGAGDQGLMFGYASNETDVLMPAPITFSHQLVQRQAEARKSGLLPWLRPDAKSQVTCRYEGGKVVGIDAVVLSTQHNPDVSYADLREGVMELIVKHVLPAELLSKDTQFHINPTGQFIIGGPVGDCGLTGRKIIVDSYGGMARHGGGAFSGKDPSKVDRSAAYAGRYVAKNIVAAGLAERCEIQVSYAIGVAQPTSISLNTFGTGKISDDKIVKLVREIFDLRPYAITTMLDLLHPMYQETAAYGHFGRTPAQKTVGDDTFTTFTWEKTDRANDLRIAAGL.

Residue histidine 16 participates in ATP binding. Aspartate 18 contacts Mg(2+). Glutamate 44 provides a ligand contact to K(+). L-methionine contacts are provided by glutamate 57 and glutamine 100. The flexible loop stretch occupies residues 100–110 (QSPDINQGVDR). Residues 165 to 167 (DAK), aspartate 240, 246 to 247 (RK), alanine 263, and lysine 267 contribute to the ATP site. Aspartate 240 lines the L-methionine pocket. Lysine 271 is an L-methionine binding site.

The protein belongs to the AdoMet synthase family. As to quaternary structure, homotetramer; dimer of dimers. Requires Mg(2+) as cofactor. The cofactor is K(+).

The protein resides in the cytoplasm. The catalysed reaction is L-methionine + ATP + H2O = S-adenosyl-L-methionine + phosphate + diphosphate. It functions in the pathway amino-acid biosynthesis; S-adenosyl-L-methionine biosynthesis; S-adenosyl-L-methionine from L-methionine: step 1/1. Functionally, catalyzes the formation of S-adenosylmethionine (AdoMet) from methionine and ATP. The overall synthetic reaction is composed of two sequential steps, AdoMet formation and the subsequent tripolyphosphate hydrolysis which occurs prior to release of AdoMet from the enzyme. The chain is S-adenosylmethionine synthase from Pseudomonas fluorescens (strain SBW25).